Reading from the N-terminus, the 263-residue chain is uncharacterized protein (263 aa).

Position 16–23 (16–23) interacts with ATP; sequence AKGGTGKT.

The protein to M.jannaschii MJ0547 and MJ0169.

This is an uncharacterized protein from Methanocaldococcus jannaschii (strain ATCC 43067 / DSM 2661 / JAL-1 / JCM 10045 / NBRC 100440) (Methanococcus jannaschii).